Here is a 111-residue protein sequence, read N- to C-terminus: MGSSSFLVLMVSLTLVTLVAAEGVKGGIEKAGVCPADNVRCFKSDPPQCHTDQDCLGERKCCYLHCGFKCVIPVKKLEEGGNKDEDVSGPCPEPGWEAKSPGSSSTGCPQK.

A signal peptide spans 1–23 (MGSSSFLVLMVSLTLVTLVAAEG). Residues 27 to 74 (GIEKAGVCPADNVRCFKSDPPQCHTDQDCLGERKCCYLHCGFKCVIPV) form the WAP domain. Cystine bridges form between Cys-34–Cys-62, Cys-41–Cys-66, Cys-49–Cys-61, and Cys-55–Cys-70. A disordered region spans residues 80–111 (GGNKDEDVSGPCPEPGWEAKSPGSSSTGCPQK). Residues 101–111 (PGSSSTGCPQK) are compositionally biased toward polar residues.

The protein localises to the secreted. Its function is as follows. Antibacterial protein. Putative acid-stable proteinase inhibitor. The sequence is that of WAP four-disulfide core domain protein 12 (WFDC12) from Chlorocebus aethiops (Green monkey).